Reading from the N-terminus, the 147-residue chain is Microsomal glutathione S-transferase 2 (147 aa).

The next 3 helical transmembrane spans lie at Ile-6–Val-26, Phe-59–Ala-79, and Ser-111–Leu-131.

This sequence belongs to the MAPEG family. In terms of assembly, homotrimer. In terms of tissue distribution, liver, spleen, skeletal muscle, heart, adrenals, pancreas, prostate, testis, fetal liver, and fetal spleen. Very low expression in lung, brain, placenta and bone marrow. Abundantly expressed in human umbilical vein endothelial cells (at protein level).

Its subcellular location is the endoplasmic reticulum membrane. It is found in the microsome membrane. The catalysed reaction is RX + glutathione = an S-substituted glutathione + a halide anion + H(+). The enzyme catalyses 1-chloro-2,4-dinitrobenzene + glutathione = 2,4-dinitrophenyl-S-glutathione + chloride + H(+). It catalyses the reaction leukotriene C4 = leukotriene A4 + glutathione. It carries out the reaction (5S)-hydroperoxy-(6E,8Z,11Z,14Z)-eicosatetraenoate + 2 glutathione = (5S)-hydroxy-(6E,8Z,11Z,14Z)-eicosatetraenoate + glutathione disulfide + H2O. Its activity is regulated as follows. Each monomer can bind on GSH molecule but only one subunit is catalytically active. Catalyzes several different glutathione-dependent reactions. Catalyzes the glutathione-dependent reduction of lipid hydroperoxides, such as 5-HPETE. Has glutathione transferase activity, toward xenobiotic electrophiles, such as 1-chloro-2, 4-dinitrobenzene (CDNB). Also catalyzes the conjugation of leukotriene A4 with reduced glutathione to form leukotriene C4 (LTC4). Involved in oxidative DNA damage induced by ER stress and anticancer agents by activating LTC4 biosynthetic machinery in nonimmune cells. In Homo sapiens (Human), this protein is Microsomal glutathione S-transferase 2 (MGST2).